The following is a 310-amino-acid chain: Protein-methionine-sulfoxide reductase catalytic subunit MsrP (310 aa).

The segment at residues 1-45 (MRKTSSPRIAPSEITPRDLYHDRRRFMQAAAGAAAAALWPHWLSA) is a signal peptide (tat-type signal). Mo-molybdopterin contacts are provided by residues Asn-73, 76–77 (YE), Cys-131, Thr-166, Asn-214, Arg-219, and 230–232 (SAK).

Belongs to the MsrP family. As to quaternary structure, heterodimer of a catalytic subunit (MsrP) and a heme-binding subunit (MsrQ). The cofactor is Mo-molybdopterin. Predicted to be exported by the Tat system. The position of the signal peptide cleavage has not been experimentally proven.

The protein resides in the periplasm. It carries out the reaction L-methionyl-[protein] + a quinone + H2O = L-methionyl-(S)-S-oxide-[protein] + a quinol. The enzyme catalyses L-methionyl-[protein] + a quinone + H2O = L-methionyl-(R)-S-oxide-[protein] + a quinol. In terms of biological role, part of the MsrPQ system that repairs oxidized periplasmic proteins containing methionine sulfoxide residues (Met-O), using respiratory chain electrons. Thus protects these proteins from oxidative-stress damage caused by reactive species of oxygen and chlorine generated by the host defense mechanisms. MsrPQ is essential for the maintenance of envelope integrity under bleach stress, rescuing a wide series of structurally unrelated periplasmic proteins from methionine oxidation. The catalytic subunit MsrP is non-stereospecific, being able to reduce both (R-) and (S-) diastereoisomers of methionine sulfoxide. The protein is Protein-methionine-sulfoxide reductase catalytic subunit MsrP of Methylococcus capsulatus (strain ATCC 33009 / NCIMB 11132 / Bath).